The primary structure comprises 256 residues: Thiazole synthase (256 aa).

Lysine 99 serves as the catalytic Schiff-base intermediate with DXP. 1-deoxy-D-xylulose 5-phosphate-binding positions include glycine 160, 186-187 (AG), and 208-209 (NT).

The protein belongs to the ThiG family. Homotetramer. Forms heterodimers with either ThiH or ThiS.

It is found in the cytoplasm. It carries out the reaction [ThiS sulfur-carrier protein]-C-terminal-Gly-aminoethanethioate + 2-iminoacetate + 1-deoxy-D-xylulose 5-phosphate = [ThiS sulfur-carrier protein]-C-terminal Gly-Gly + 2-[(2R,5Z)-2-carboxy-4-methylthiazol-5(2H)-ylidene]ethyl phosphate + 2 H2O + H(+). It functions in the pathway cofactor biosynthesis; thiamine diphosphate biosynthesis. Its function is as follows. Catalyzes the rearrangement of 1-deoxy-D-xylulose 5-phosphate (DXP) to produce the thiazole phosphate moiety of thiamine. Sulfur is provided by the thiocarboxylate moiety of the carrier protein ThiS. In vitro, sulfur can be provided by H(2)S. The polypeptide is Thiazole synthase (Neorickettsia sennetsu (strain ATCC VR-367 / Miyayama) (Ehrlichia sennetsu)).